We begin with the raw amino-acid sequence, 1791 residues long: Protein TIC 214 (1791 aa).

A run of 6 helical transmembrane segments spans residues 19 to 39, 68 to 88, 91 to 111, 133 to 153, 176 to 196, and 227 to 247; these read IINS…FSIG, FIAG…HLAL, PHTI…WNNH, VFLN…SSML, VGWL…LVWI, and IFSI…PSPI. The tract at residues 1492-1511 is disordered; the sequence is ASQVELESDKENKKNPESAL. Basic and acidic residues predominate over residues 1498–1511; that stretch reads ESDKENKKNPESAL.

The protein belongs to the TIC214 family. In terms of assembly, part of the Tic complex.

It localises to the plastid. Its subcellular location is the chloroplast inner membrane. Involved in protein precursor import into chloroplasts. May be part of an intermediate translocation complex acting as a protein-conducting channel at the inner envelope. This chain is Protein TIC 214, found in Barbarea verna (Land cress).